The chain runs to 89 residues: Small ribosomal subunit protein uS15 (89 aa).

Belongs to the universal ribosomal protein uS15 family. Part of the 30S ribosomal subunit. Forms a bridge to the 50S subunit in the 70S ribosome, contacting the 23S rRNA.

One of the primary rRNA binding proteins, it binds directly to 16S rRNA where it helps nucleate assembly of the platform of the 30S subunit by binding and bridging several RNA helices of the 16S rRNA. Functionally, forms an intersubunit bridge (bridge B4) with the 23S rRNA of the 50S subunit in the ribosome. This chain is Small ribosomal subunit protein uS15, found in Geobacillus kaustophilus (strain HTA426).